Here is a 475-residue protein sequence, read N- to C-terminus: Trifunctional enzyme subunit beta, mitochondrial (475 aa).

The N-terminal 34 residues, 1–34 (MTTILTSTFRNLSTTSKWALRSSIRPLSCSSQLH), are a transit peptide targeting the mitochondrion. Lys53 is subject to N6-succinyllysine. Lys73 bears the N6-acetyllysine; alternate mark. Lys73 is subject to N6-succinyllysine; alternate. The Acyl-thioester intermediate role is filled by Cys139. An intramembrane segment occupies 174–221 (IRHSRNMRKMMLDLNKAKTLGQRLSLLSKFRLNFLSPELPAVAEFSTN). An N6-acetyllysine; alternate modification is found at Lys189. An N6-succinyllysine; alternate modification is found at Lys189. Residues Lys191, Lys273, and Lys292 each carry the N6-succinyllysine modification. N6-acetyllysine; alternate is present on Lys294. Lys294 is modified (N6-succinyllysine; alternate). Lys299 is modified (N6-acetyllysine). Residue Lys333 is modified to N6-acetyllysine; alternate. Lys333 is modified (N6-succinyllysine; alternate). N6-acetyllysine is present on residues Lys349 and Lys362. The active-site Proton donor/acceptor is the Cys459.

Belongs to the thiolase-like superfamily. Thiolase family. As to quaternary structure, heterotetramer of 2 alpha/HADHA and 2 beta/HADHB subunits; forms the mitochondrial trifunctional enzyme. Also purified as higher order heterooligomers including a 4 alpha/HADHA and 4 beta/HADHB heterooligomer which physiological significance remains unclear. The mitochondrial trifunctional enzyme interacts with MTLN. Interacts with RSAD2/viperin. Post-translationally, acetylation of Lys-202 is observed in liver mitochondria from fasted mice but not from fed mice.

The protein resides in the mitochondrion. The protein localises to the mitochondrion inner membrane. It is found in the mitochondrion outer membrane. Its subcellular location is the endoplasmic reticulum. The enzyme catalyses an acyl-CoA + acetyl-CoA = a 3-oxoacyl-CoA + CoA. The catalysed reaction is butanoyl-CoA + acetyl-CoA = 3-oxohexanoyl-CoA + CoA. It catalyses the reaction hexanoyl-CoA + acetyl-CoA = 3-oxooctanoyl-CoA + CoA. It carries out the reaction octanoyl-CoA + acetyl-CoA = 3-oxodecanoyl-CoA + CoA. The enzyme catalyses decanoyl-CoA + acetyl-CoA = 3-oxododecanoyl-CoA + CoA. The catalysed reaction is dodecanoyl-CoA + acetyl-CoA = 3-oxotetradecanoyl-CoA + CoA. It catalyses the reaction tetradecanoyl-CoA + acetyl-CoA = 3-oxohexadecanoyl-CoA + CoA. It participates in lipid metabolism; fatty acid beta-oxidation. Functionally, mitochondrial trifunctional enzyme catalyzes the last three of the four reactions of the mitochondrial beta-oxidation pathway. The mitochondrial beta-oxidation pathway is the major energy-producing process in tissues and is performed through four consecutive reactions breaking down fatty acids into acetyl-CoA. Among the enzymes involved in this pathway, the trifunctional enzyme exhibits specificity for long-chain fatty acids. Mitochondrial trifunctional enzyme is a heterotetrameric complex composed of two proteins, the trifunctional enzyme subunit alpha/HADHA carries the 2,3-enoyl-CoA hydratase and the 3-hydroxyacyl-CoA dehydrogenase activities, while the trifunctional enzyme subunit beta/HADHB described here bears the 3-ketoacyl-CoA thiolase activity. In Mus musculus (Mouse), this protein is Trifunctional enzyme subunit beta, mitochondrial (Hadhb).